We begin with the raw amino-acid sequence, 465 residues long: GTPase Der (465 aa).

EngA-type G domains lie at 3 to 166 (FLVA…LNEF) and 184 to 358 (IHFS…ACAN). Residues 9–16 (GRANVGKS), 56–60 (DTGGI), 118–121 (NKVD), 190–197 (GRPNVGKS), 237–241 (DTAGV), and 302–305 (NKWD) contribute to the GTP site. Residues 359 to 443 (KKITTADATR…PIVFEFKQSE (85 aa)) form the KH-like domain.

This sequence belongs to the TRAFAC class TrmE-Era-EngA-EngB-Septin-like GTPase superfamily. EngA (Der) GTPase family. As to quaternary structure, associates with the 50S ribosomal subunit.

Its function is as follows. GTPase that plays an essential role in the late steps of ribosome biogenesis. The polypeptide is GTPase Der (Francisella philomiragia subsp. philomiragia (strain ATCC 25017 / CCUG 19701 / FSC 153 / O#319-036)).